A 277-amino-acid chain; its full sequence is Large ribosomal subunit protein uL2 (277 aa).

The interval 226-277 (MNPVDHPHGGGEGRSPIGMPSPVTPWGKPTLGYKTRKPNKKSDRLIVSRRKK) is disordered.

Belongs to the universal ribosomal protein uL2 family. In terms of assembly, part of the 50S ribosomal subunit. Forms a bridge to the 30S subunit in the 70S ribosome.

In terms of biological role, one of the primary rRNA binding proteins. Required for association of the 30S and 50S subunits to form the 70S ribosome, for tRNA binding and peptide bond formation. It has been suggested to have peptidyltransferase activity; this is somewhat controversial. Makes several contacts with the 16S rRNA in the 70S ribosome. In Symbiobacterium thermophilum (strain DSM 24528 / JCM 14929 / IAM 14863 / T), this protein is Large ribosomal subunit protein uL2.